We begin with the raw amino-acid sequence, 368 residues long: MKVLLLLCSCILVIHALPFEQRGFWDFSMDDGMAMMKDEEASGVGPIPTESIPDVGLPPMDLCPFGCQCHLRVVQCSDLGLTSIPKNLPKDTTLLDLQNNKITEIKKDDFKGLTNLYALVIVNNKISKINEKAFEPLQKMQKLYISKNNLEEIPKNLPKSLVELRIHENKIKKVPKGVFSGLKNMNCIEMGGNPLENGGIEAGAFDGLKLNYLRVSEAKLSGIPKGLPSTLNELHLDNNKIQAIEKEDLSQYASLYRLGLGHNNIRMIENGSLSFMPVLRELHLDNNKLSKVPPGLPDMKLLQVVYLHSNNITQVGVNDFCPIGFGVKRAYYNGISLFNNPVPYWEVQPATFRCVTDRLAIQFGNYRK.

Positions Met1–Ala16 are cleaved as a signal peptide. The propeptide occupies Leu17–Lys37. Intrachain disulfides connect Cys63-Cys69 and Cys67-Cys76. LRR repeat units lie at residues Thr82–Ile102, Thr103–Ile126, Ser127–Leu150, Glu151–Ile171, Lys172–Leu195, Glu196–Leu220, Ser221–Ile241, Gln242–Ile265, Arg266–Leu289, Ser290–Ile312, Thr313–Val342, and Pro343–Lys368. Residues Asn270 and Asn311 are each glycosylated (N-linked (GlcNAc...) asparagine). Cys321 and Cys354 are oxidised to a cystine.

This sequence belongs to the small leucine-rich proteoglycan (SLRP) family. SLRP class I subfamily.

The protein resides in the secreted. It localises to the extracellular space. It is found in the extracellular matrix. May be involved in collagen fiber assembly. The protein is Biglycan (bgn) of Xenopus laevis (African clawed frog).